Consider the following 397-residue polypeptide: Alanine racemase, biosynthetic (397 aa).

Residue Lys42 is the Proton acceptor; specific for D-alanine of the active site. At Lys42 the chain carries N6-(pyridoxal phosphate)lysine. Residue Arg136 participates in substrate binding. Tyr257 (proton acceptor; specific for L-alanine) is an active-site residue. Met305 contacts substrate. The disordered stretch occupies residues 373–397 (ANRPTEAMSNPSRAKSRPMDKQALI).

The protein belongs to the alanine racemase family. It depends on pyridoxal 5'-phosphate as a cofactor.

The enzyme catalyses L-alanine = D-alanine. Its pathway is amino-acid biosynthesis; D-alanine biosynthesis; D-alanine from L-alanine: step 1/1. It functions in the pathway cell wall biogenesis; peptidoglycan biosynthesis. Functionally, catalyzes the interconversion of L-alanine and D-alanine. Provides the D-alanine required for cell wall biosynthesis. This is Alanine racemase, biosynthetic (alr) from Mesorhizobium japonicum (strain LMG 29417 / CECT 9101 / MAFF 303099) (Mesorhizobium loti (strain MAFF 303099)).